Here is a 103-residue protein sequence, read N- to C-terminus: Large ribosomal subunit protein bL21 (103 aa).

The protein belongs to the bacterial ribosomal protein bL21 family. Part of the 50S ribosomal subunit. Contacts protein L20.

Its function is as follows. This protein binds to 23S rRNA in the presence of protein L20. In Beijerinckia indica subsp. indica (strain ATCC 9039 / DSM 1715 / NCIMB 8712), this protein is Large ribosomal subunit protein bL21.